The sequence spans 228 residues: Demethylmenaquinone methyltransferase (228 aa).

S-adenosyl-L-methionine-binding positions include Thr62, Asp80, 100–101 (DA), and Ser117.

This sequence belongs to the class I-like SAM-binding methyltransferase superfamily. MenG/UbiE family.

It catalyses the reaction a 2-demethylmenaquinol + S-adenosyl-L-methionine = a menaquinol + S-adenosyl-L-homocysteine + H(+). It functions in the pathway quinol/quinone metabolism; menaquinone biosynthesis; menaquinol from 1,4-dihydroxy-2-naphthoate: step 2/2. Methyltransferase required for the conversion of demethylmenaquinol (DMKH2) to menaquinol (MKH2). The polypeptide is Demethylmenaquinone methyltransferase (Mycolicibacterium vanbaalenii (strain DSM 7251 / JCM 13017 / BCRC 16820 / KCTC 9966 / NRRL B-24157 / PYR-1) (Mycobacterium vanbaalenii)).